We begin with the raw amino-acid sequence, 125 residues long: Ribonuclease P protein component (125 aa).

It belongs to the RnpA family. In terms of assembly, consists of a catalytic RNA component (M1 or rnpB) and a protein subunit.

The enzyme catalyses Endonucleolytic cleavage of RNA, removing 5'-extranucleotides from tRNA precursor.. Its function is as follows. RNaseP catalyzes the removal of the 5'-leader sequence from pre-tRNA to produce the mature 5'-terminus. It can also cleave other RNA substrates such as 4.5S RNA. The protein component plays an auxiliary but essential role in vivo by binding to the 5'-leader sequence and broadening the substrate specificity of the ribozyme. The sequence is that of Ribonuclease P protein component from Rhodococcus jostii (strain RHA1).